The following is a 406-amino-acid chain: Tyrosine--tRNA ligase (406 aa).

Tyr35 is an L-tyrosine binding site. Positions 40–49 (PTADSLHVGH) match the 'HIGH' region motif. Residues Tyr168 and Gln172 each coordinate L-tyrosine. The 'KMSKS' region motif lies at 228 to 232 (KMGKT). Lys231 is a binding site for ATP. The S4 RNA-binding domain occupies 340–404 (LPILDVMAST…RGKKNYNKIE (65 aa)).

Belongs to the class-I aminoacyl-tRNA synthetase family. TyrS type 1 subfamily. In terms of assembly, homodimer.

It is found in the cytoplasm. It carries out the reaction tRNA(Tyr) + L-tyrosine + ATP = L-tyrosyl-tRNA(Tyr) + AMP + diphosphate + H(+). In terms of biological role, catalyzes the attachment of tyrosine to tRNA(Tyr) in a two-step reaction: tyrosine is first activated by ATP to form Tyr-AMP and then transferred to the acceptor end of tRNA(Tyr). The protein is Tyrosine--tRNA ligase of Clostridium beijerinckii (strain ATCC 51743 / NCIMB 8052) (Clostridium acetobutylicum).